Reading from the N-terminus, the 193-residue chain is RNA pyrophosphohydrolase (193 aa).

The region spanning 6–149 (GFRPNVGIIL…KRDVYQRALQ (144 aa)) is the Nudix hydrolase domain. A Nudix box motif is present at residues 38–59 (GGIKFGETPEQAMFRELEEEVG). The disordered stretch occupies residues 174-193 (THSARKTDEPSTEQTKPNNE).

The protein belongs to the Nudix hydrolase family. RppH subfamily. A divalent metal cation is required as a cofactor.

Accelerates the degradation of transcripts by removing pyrophosphate from the 5'-end of triphosphorylated RNA, leading to a more labile monophosphorylated state that can stimulate subsequent ribonuclease cleavage. The chain is RNA pyrophosphohydrolase from Herminiimonas arsenicoxydans.